The primary structure comprises 293 residues: Formamidopyrimidine-DNA glycosylase (293 aa).

Catalysis depends on Pro2, which acts as the Schiff-base intermediate with DNA. The active-site Proton donor is the Glu3. Lys58 functions as the Proton donor; for beta-elimination activity in the catalytic mechanism. DNA contacts are provided by His104, Arg127, and Arg170. The segment at 257–293 adopts an FPG-type zinc-finger fold; the sequence is SVYGREGKPCRNPACGGTVERVVQSGRSTFFCASCQT. The active-site Proton donor; for delta-elimination activity is Arg283.

The protein belongs to the FPG family. As to quaternary structure, monomer. Requires Zn(2+) as cofactor.

The catalysed reaction is Hydrolysis of DNA containing ring-opened 7-methylguanine residues, releasing 2,6-diamino-4-hydroxy-5-(N-methyl)formamidopyrimidine.. It catalyses the reaction 2'-deoxyribonucleotide-(2'-deoxyribose 5'-phosphate)-2'-deoxyribonucleotide-DNA = a 3'-end 2'-deoxyribonucleotide-(2,3-dehydro-2,3-deoxyribose 5'-phosphate)-DNA + a 5'-end 5'-phospho-2'-deoxyribonucleoside-DNA + H(+). In terms of biological role, involved in base excision repair of DNA damaged by oxidation or by mutagenic agents. Acts as a DNA glycosylase that recognizes and removes damaged bases. Has a preference for oxidized purines, such as 7,8-dihydro-8-oxoguanine (8-oxoG). Has AP (apurinic/apyrimidinic) lyase activity and introduces nicks in the DNA strand. Cleaves the DNA backbone by beta-delta elimination to generate a single-strand break at the site of the removed base with both 3'- and 5'-phosphates. The sequence is that of Formamidopyrimidine-DNA glycosylase from Brucella canis (strain ATCC 23365 / NCTC 10854 / RM-666).